Consider the following 78-residue polypeptide: Small ribosomal subunit protein bS20 (78 aa).

This sequence belongs to the bacterial ribosomal protein bS20 family.

Its function is as follows. Binds directly to 16S ribosomal RNA. This is Small ribosomal subunit protein bS20 from Streptococcus pneumoniae serotype 2 (strain D39 / NCTC 7466).